We begin with the raw amino-acid sequence, 88 residues long: UPF0297 protein SSA_2241 (88 aa).

The protein belongs to the UPF0297 family.

This Streptococcus sanguinis (strain SK36) protein is UPF0297 protein SSA_2241.